Here is a 182-residue protein sequence, read N- to C-terminus: Large ribosomal subunit protein uL10 (182 aa).

This sequence belongs to the universal ribosomal protein uL10 family. In terms of assembly, part of the ribosomal stalk of the 50S ribosomal subunit. The N-terminus interacts with L11 and the large rRNA to form the base of the stalk. The C-terminus forms an elongated spine to which L12 dimers bind in a sequential fashion forming a multimeric L10(L12)X complex.

In terms of biological role, forms part of the ribosomal stalk, playing a central role in the interaction of the ribosome with GTP-bound translation factors. The chain is Large ribosomal subunit protein uL10 from Chloroflexus aurantiacus (strain ATCC 29364 / DSM 637 / Y-400-fl).